A 243-amino-acid polypeptide reads, in one-letter code: MNRIKAVGYENNELKEKAQLLADQLNLQLDQNADTCLFVTPEKLTLKIRNFSLMFADFSAMTWSKRRGEGKRQGLIRACKPTKGIKILDATAGWGKDAAILATFGADVVMLERHPVMAALLADALSRRNEADIQKMCLSLIASDAISFLHSLQEKDYPDIIYIDPMHPERNKSALVKKEMQVLQQLIGTDHDAMELIELSLSHVKSRVVVKWPQKVKPLLPPDASIDGKTVRFDIYMAQFSSN.

S-adenosyl-L-methionine contacts are provided by residues 112–113 (ER) and D164.

The protein belongs to the methyltransferase superfamily. RsmJ family.

The protein localises to the cytoplasm. The enzyme catalyses guanosine(1516) in 16S rRNA + S-adenosyl-L-methionine = N(2)-methylguanosine(1516) in 16S rRNA + S-adenosyl-L-homocysteine + H(+). Its function is as follows. Specifically methylates the guanosine in position 1516 of 16S rRNA. The chain is Ribosomal RNA small subunit methyltransferase J from Legionella pneumophila subsp. pneumophila (strain Philadelphia 1 / ATCC 33152 / DSM 7513).